We begin with the raw amino-acid sequence, 191 residues long: Calcium-activated potassium channel subunit beta-1 (191 aa).

The Cytoplasmic segment spans residues Met1–Arg15. A helical transmembrane segment spans residues Ala16–Thr36. Over Thr37–Leu157 the chain is Extracellular. Asn80 and Asn142 each carry an N-linked (GlcNAc...) asparagine glycan. A helical membrane pass occupies residues Leu158 to Val178. At Lys179–Lys191 the chain is on the cytoplasmic side.

Belongs to the KCNMB (TC 8.A.14.1) family. KCNMB1 subfamily. As to quaternary structure, interacts with KCNMA1 tetramer. There are probably 4 molecules of KCMNB1 per KCNMA1 tetramer. N-glycosylated.

The protein localises to the membrane. Its function is as follows. Regulatory subunit of the calcium activated potassium KCNMA1 (maxiK) channel. Modulates the calcium sensitivity and gating kinetics of KCNMA1, thereby contributing to KCNMA1 channel diversity. Increases the apparent Ca(2+)/voltage sensitivity of the KCNMA1 channel. It also modifies KCNMA1 channel kinetics and alters its pharmacological properties. It slows down the activation and the deactivation kinetics of the channel. Acts as a negative regulator of smooth muscle contraction by enhancing the calcium sensitivity to KCNMA1. Its presence is also a requirement for internal binding of the KCNMA1 channel opener dehydrosoyasaponin I (DHS-1) triterpene glycoside and for external binding of the agonist hormone 17-beta-estradiol (E2). Increases the binding activity of charybdotoxin (CTX) toxin to KCNMA1 peptide blocker by increasing the CTX association rate and decreasing the dissociation rate. This is Calcium-activated potassium channel subunit beta-1 (KCNMB1) from Oryctolagus cuniculus (Rabbit).